The following is a 312-amino-acid chain: DNA-directed RNA polymerase subunit alpha (312 aa).

The alpha N-terminal domain (alpha-NTD) stretch occupies residues 1 to 226; it reads MIEFEKPRIE…EHLDIFVNLT (226 aa). The interval 243-312 is alpha C-terminal domain (alpha-CTD); sequence KEKMLEMTIE…DLGLGLRKDD (70 aa).

The protein belongs to the RNA polymerase alpha chain family. Homodimer. The RNAP catalytic core consists of 2 alpha, 1 beta, 1 beta' and 1 omega subunit. When a sigma factor is associated with the core the holoenzyme is formed, which can initiate transcription.

The enzyme catalyses RNA(n) + a ribonucleoside 5'-triphosphate = RNA(n+1) + diphosphate. Functionally, DNA-dependent RNA polymerase catalyzes the transcription of DNA into RNA using the four ribonucleoside triphosphates as substrates. This Enterococcus faecalis (strain ATCC 700802 / V583) protein is DNA-directed RNA polymerase subunit alpha.